We begin with the raw amino-acid sequence, 540 residues long: Synaptotagmin-3 (540 aa).

The chain crosses the membrane as a helical span at residues 9-29; it reads GIIGFVIGIPIGLILGFFVLI. Positions 67-249 constitute an SMP-LTD domain; the sequence is DYERVDWFNK…WPQVLEIPIL (183 aa). The phospholipid binding stretch occupies residues 227–509; sequence QETIKRQVSS…ELGHVDINLD (283 aa). 2 C2 domains span residues 240–363 and 401–521; these read WPQV…EFNL and RKES…NQKY. Ca(2+) is bound by residues Asp277, Asp283, Asp333, Asp335, and Asp341.

Belongs to the synaptotagmin family. Ca(2+) is required as a cofactor.

It localises to the membrane. Its function is as follows. May be involved in membrane trafficking. This Arabidopsis thaliana (Mouse-ear cress) protein is Synaptotagmin-3 (SYT3).